Consider the following 212-residue polypeptide: NAD(P)H-quinone oxidoreductase subunit K, chloroplastic (212 aa).

[4Fe-4S] cluster-binding residues include cysteine 43, cysteine 44, cysteine 108, and cysteine 139.

This sequence belongs to the complex I 20 kDa subunit family. In terms of assembly, NDH is composed of at least 16 different subunits, 5 of which are encoded in the nucleus. Requires [4Fe-4S] cluster as cofactor.

Its subcellular location is the plastid. It localises to the chloroplast thylakoid membrane. It catalyses the reaction a plastoquinone + NADH + (n+1) H(+)(in) = a plastoquinol + NAD(+) + n H(+)(out). The enzyme catalyses a plastoquinone + NADPH + (n+1) H(+)(in) = a plastoquinol + NADP(+) + n H(+)(out). NDH shuttles electrons from NAD(P)H:plastoquinone, via FMN and iron-sulfur (Fe-S) centers, to quinones in the photosynthetic chain and possibly in a chloroplast respiratory chain. The immediate electron acceptor for the enzyme in this species is believed to be plastoquinone. Couples the redox reaction to proton translocation, and thus conserves the redox energy in a proton gradient. The polypeptide is NAD(P)H-quinone oxidoreductase subunit K, chloroplastic (Phaseolus vulgaris (Kidney bean)).